We begin with the raw amino-acid sequence, 540 residues long: Probable feruloyl esterase B-1 (540 aa).

The N-terminal stretch at Met-1–Ala-18 is a signal peptide. 6 N-linked (GlcNAc...) asparagine glycosylation sites follow: Asn-28, Asn-49, Asn-66, Asn-95, Asn-113, and Asn-195. Disulfide bonds link Cys-41/Cys-90 and Cys-76/Cys-129. 3 cysteine pairs are disulfide-bonded: Cys-202/Cys-458, Cys-271/Cys-288, and Cys-297/Cys-308. The active-site Acyl-ester intermediate is Ser-203. The N-linked (GlcNAc...) asparagine glycan is linked to Asn-234. Residues Asp-272, Asp-275, Ala-277, Asp-279, and Ile-281 each contribute to the Ca(2+) site. 3 N-linked (GlcNAc...) asparagine glycosylation sites follow: Asn-298, Asn-328, and Asn-367. Active-site charge relay system residues include Asp-417 and His-457. Asn-506 carries an N-linked (GlcNAc...) asparagine glycan. Cys-517 and Cys-539 form a disulfide bridge.

This sequence belongs to the tannase family. As to quaternary structure, homodimer.

It is found in the secreted. It carries out the reaction feruloyl-polysaccharide + H2O = ferulate + polysaccharide.. Functionally, involved in degradation of plant cell walls. Hydrolyzes the feruloyl-arabinose ester bond in arabinoxylans as well as the feruloyl-galactose and feruloyl-arabinose ester bonds in pectin. This is Probable feruloyl esterase B-1 (faeB-1) from Aspergillus oryzae (strain ATCC 42149 / RIB 40) (Yellow koji mold).